The sequence spans 1488 residues: Phenolphthiocerol/phthiocerol polyketide synthase subunit E (1488 aa).

Residues 5–438 (ENAIAVVGMA…GTNAHVVLEE (434 aa)) form the Ketosynthase family 3 (KS3) domain. Residues cysteine 184, histidine 320, and histidine 361 each act as for beta-ketoacyl synthase activity in the active site. The tract at residues 551 to 868 (VFLFPGQGAQ…GELWSAGVEV (318 aa)) is acyltransferase. Serine 641 acts as the For malonyltransferase activity in catalysis. Residues 930–1004 (NGESQTEVTL…SLTAAVDASF (75 aa)) enclose the Carrier domain. Serine 965 is subject to O-(pantetheine 4'-phosphoryl)serine. 1286–1331 (EGVVAVELEGEGRSVLRPDVDLRRTVGWFTTYYPVPLACATGLGAL) serves as a coordination point for NADP(+).

Requires NADP(+) as cofactor. It depends on pantetheine 4'-phosphate as a cofactor.

The enzyme catalyses icosanoyl-[(phenol)carboxyphthiodiolenone synthase] + 2 (S)-methylmalonyl-CoA + 3 malonyl-CoA + 5 NADPH + 10 H(+) = C32-carboxyphthiodiolenone-[(phenol)carboxyphthiodiolenone synthase] + 5 CO2 + 5 NADP(+) + 5 CoA + 2 H2O. The catalysed reaction is docosanoyl-[(phenol)carboxyphthiodiolenone synthase] + 2 (S)-methylmalonyl-CoA + 3 malonyl-CoA + 5 NADPH + 10 H(+) = C34-carboxyphthiodiolenone-[(phenol)carboxyphthiodiolenone synthase] + 5 CO2 + 5 NADP(+) + 5 CoA + 2 H2O. It carries out the reaction 17-(4-hydroxyphenyl)heptadecanoyl-[(phenol)carboxyphthiodiolenone synthase] + 2 (S)-methylmalonyl-CoA + 3 malonyl-CoA + 5 NADPH + 10 H(+) = C35-(phenol)carboxyphthiodiolenone-[(phenol)carboxyphthiodiolenone synthase] + 5 CO2 + 5 NADP(+) + 5 CoA + 2 H2O. It catalyses the reaction 19-(4-hydroxyphenyl)nonadecanoyl-[(phenol)carboxyphthiodiolenone synthase] + 2 (S)-methylmalonyl-CoA + 3 malonyl-CoA + 5 NADPH + 10 H(+) = C37-(phenol)carboxyphthiodiolenone-[(phenol)carboxyphthiodiolenone synthase] + 5 CO2 + 5 NADP(+) + 5 CoA + 2 H2O. The protein operates within lipid metabolism; fatty acid biosynthesis. In terms of biological role, part of the PpsABCDE complex involved in the biosynthesis of the lipid core common to phthiocerols and phenolphthiocerols by successive additions of malonyl-CoA or methylmalonyl-CoA extender units. PpsA can accept as substrate the activated forms of either icosanoyl (C20), docosanoyl (C22) or lignoceroyl (C24) groups from FadD26, or a (4-hydroxyphenyl)-C17 or (4-hydroxyphenyl)-C19 fatty acyl from FadD29. PpsA initiates the biosynthesis and extends its substrate using a malonyl-CoA extender unit. The PpsB and PpsC proteins add the second and third malonyl-CoA extender units. PpsD adds an (R)-methylmalonyl unit and PpsE adds a second (R)-methylmalonyl unit. The incorporation of the methylmalonyl units results in formation of two branched methyl groups in the elongated product. The sequence is that of Phenolphthiocerol/phthiocerol polyketide synthase subunit E (ppsE) from Mycobacterium tuberculosis (strain CDC 1551 / Oshkosh).